A 430-amino-acid polypeptide reads, in one-letter code: Tol-Pal system protein TolB (430 aa).

An N-terminal signal peptide occupies residues 1–26 (MSLMTKLGLRALVASCLIAAGGAAHA).

It belongs to the TolB family. In terms of assembly, the Tol-Pal system is composed of five core proteins: the inner membrane proteins TolA, TolQ and TolR, the periplasmic protein TolB and the outer membrane protein Pal. They form a network linking the inner and outer membranes and the peptidoglycan layer.

The protein resides in the periplasm. Its function is as follows. Part of the Tol-Pal system, which plays a role in outer membrane invagination during cell division and is important for maintaining outer membrane integrity. In Paraburkholderia phymatum (strain DSM 17167 / CIP 108236 / LMG 21445 / STM815) (Burkholderia phymatum), this protein is Tol-Pal system protein TolB.